Consider the following 252-residue polypeptide: Chitooligosaccharide deacetylase (252 aa).

2 residues coordinate Mg(2+): His61 and His125.

Belongs to the YdjC deacetylase family. ChbG subfamily. Homodimer. The cofactor is Mg(2+).

The protein resides in the cytoplasm. It carries out the reaction N,N'-diacetylchitobiose + H2O = N-acetyl-beta-D-glucosaminyl-(1-&gt;4)-D-glucosamine + acetate. The catalysed reaction is diacetylchitobiose-6'-phosphate + H2O = N'-monoacetylchitobiose-6'-phosphate + acetate. Its pathway is glycan degradation; chitin degradation. In terms of biological role, involved in the degradation of chitin. ChbG is essential for growth on the acetylated chitooligosaccharides chitobiose and chitotriose but is dispensable for growth on cellobiose and chitosan dimer, the deacetylated form of chitobiose. Deacetylation of chitobiose-6-P and chitotriose-6-P is necessary for both the activation of the chb promoter by the regulatory protein ChbR and the hydrolysis of phosphorylated beta-glucosides by the phospho-beta-glucosidase ChbF. Catalyzes the removal of only one acetyl group from chitobiose-6-P to yield monoacetylchitobiose-6-P, the inducer of ChbR and the substrate of ChbF. The sequence is that of Chitooligosaccharide deacetylase from Escherichia coli O139:H28 (strain E24377A / ETEC).